The chain runs to 116 residues: Dynein light chain Tctex-type 3 (116 aa).

A 3'-nitrotyrosine modification is found at tyrosine 4.

It belongs to the dynein light chain Tctex-type family. In terms of assembly, homodimer. The cytoplasmic dynein 1 complex consists of two catalytic heavy chains (HCs) and a number of non-catalytic subunits presented by intermediate chains (ICs), light intermediate chains (LICs) and light chains (LCs); the composition seems to vary in respect to the IC, LIC and LC composition. The heavy chain homodimer serves as a scaffold for the probable homodimeric assembly of the respective non-catalytic subunits. The ICs and LICs bind directly to the HC dimer and the LCs assemble on the IC dimer. DYNLT1 and DYNLT3 compete for association with dynein IC (DYNC1I1 or DYNC1I2). Self-associates. Interacts with DYNC1I1 and DYNC1I2. Interacts with BUB3. Interacts with SATB1 in nucleus to form complex with matrix attachment regions (MARs) of DNA.

It is found in the nucleus. It localises to the cytoplasm. The protein resides in the cytoskeleton. The protein localises to the chromosome. Its subcellular location is the centromere. It is found in the kinetochore. Acts as one of several non-catalytic accessory components of the cytoplasmic dynein 1 complex that are thought to be involved in linking dynein to cargos and to adapter proteins that regulate dynein function. Cytoplasmic dynein 1 acts as a motor for the intracellular retrograde motility of vesicles and organelles along microtubules. Probably binds BUB3 as part of transport cargo. Required for the efficient progression through mitosis. This is Dynein light chain Tctex-type 3 (DYNLT3) from Canis lupus familiaris (Dog).